The chain runs to 106 residues: Iron-sulfur cluster assembly protein CyaY (106 aa).

The protein belongs to the frataxin family.

In terms of biological role, involved in iron-sulfur (Fe-S) cluster assembly. May act as a regulator of Fe-S biogenesis. This Dickeya chrysanthemi (Pectobacterium chrysanthemi) protein is Iron-sulfur cluster assembly protein CyaY.